A 126-amino-acid polypeptide reads, in one-letter code: Histone H2B type F-S (126 aa).

The span at 1–12 (MPEPAKSAPAPK) shows a compositional bias: low complexity. The disordered stretch occupies residues 1-36 (MPEPAKSAPAPKKGSKKAVTKAQKKDGRKRKRSRKE). Pro-2 is modified (N-acetylproline). An ADP-ribosyl glutamic acid modification is found at Glu-3. Lys-6 carries the N6-(2-hydroxyisobutyryl)lysine; alternate modification. Residue Lys-6 is modified to N6-(beta-hydroxybutyryl)lysine; alternate. N6-acetyllysine; alternate is present on Lys-6. Position 6 is an N6-butyryllysine; alternate (Lys-6). Lys-6 is modified (N6-crotonyllysine; alternate). An N6-lactoyllysine; alternate modification is found at Lys-6. Lys-6 is covalently cross-linked (Glycyl lysine isopeptide (Lys-Gly) (interchain with G-Cter in SUMO2); alternate). At Ser-7 the chain carries ADP-ribosylserine. Position 12 is an N6-(beta-hydroxybutyryl)lysine; alternate (Lys-12). N6-acetyllysine; alternate is present on residues Lys-12 and Lys-13. Lys-12 and Lys-13 each carry N6-crotonyllysine; alternate. Position 12 is an N6-lactoyllysine; alternate (Lys-12). Lys-13 carries the N6-(2-hydroxyisobutyryl)lysine; alternate modification. Ser-15 bears the Phosphoserine; by STK4/MST1 mark. 4 positions are modified to N6-acetyllysine; alternate: Lys-16, Lys-17, Lys-21, and Lys-24. Lys-16, Lys-17, Lys-21, and Lys-24 each carry N6-crotonyllysine; alternate. 4 positions are modified to N6-lactoyllysine; alternate: Lys-16, Lys-17, Lys-21, and Lys-24. An N6-(beta-hydroxybutyryl)lysine; alternate mark is found at Lys-17 and Lys-21. Lys-17 is subject to N6-glutaryllysine; alternate. N6-(2-hydroxyisobutyryl)lysine; alternate is present on residues Lys-21 and Lys-24. Lys-21 carries the post-translational modification N6-butyryllysine; alternate. Lys-21 is covalently cross-linked (Glycyl lysine isopeptide (Lys-Gly) (interchain with G-Cter in SUMO2); alternate). Residue Lys-25 is modified to N6-(2-hydroxyisobutyryl)lysine. Lys-35 carries the post-translational modification N6-(2-hydroxyisobutyryl)lysine; alternate. Position 35 is an N6-(beta-hydroxybutyryl)lysine; alternate (Lys-35). N6-crotonyllysine; alternate is present on Lys-35. At Lys-35 the chain carries N6-glutaryllysine; alternate. At Lys-35 the chain carries N6-succinyllysine; alternate. A Glycyl lysine isopeptide (Lys-Gly) (interchain with G-Cter in ubiquitin); alternate cross-link involves residue Lys-35. Glu-36 is subject to PolyADP-ribosyl glutamic acid. Ser-37 carries the phosphoserine; by AMPK modification. Lys-44, Lys-47, and Lys-58 each carry N6-(2-hydroxyisobutyryl)lysine; alternate. Position 44 is an N6-lactoyllysine; alternate (Lys-44). Lys-44 and Lys-47 each carry N6-glutaryllysine; alternate. The residue at position 47 (Lys-47) is an N6-methyllysine; alternate. Lys-58 bears the N6,N6-dimethyllysine; alternate mark. At Arg-80 the chain carries Dimethylated arginine. The residue at position 86 (Lys-86) is an N6-(2-hydroxyisobutyryl)lysine; alternate. Lys-86 carries the post-translational modification N6-(beta-hydroxybutyryl)lysine; alternate. Lys-86 carries the N6-acetyllysine; alternate modification. Residue Lys-86 is modified to N6-lactoyllysine; alternate. Lys-86 carries the N6,N6,N6-trimethyllysine; alternate modification. Omega-N-methylarginine is present on residues Arg-87 and Arg-93. An N6-(2-hydroxyisobutyryl)lysine; alternate modification is found at Lys-109. An N6-lactoyllysine; alternate modification is found at Lys-109. An N6-glutaryllysine; alternate modification is found at Lys-109. Lys-109 is subject to N6-methyllysine; alternate. Ser-113 carries an O-linked (GlcNAc) serine glycan. Position 116 is a phosphothreonine (Thr-116). Lys-117 and Lys-121 each carry N6-(2-hydroxyisobutyryl)lysine; alternate. Residues Lys-117 and Lys-121 each carry the N6-(beta-hydroxybutyryl)lysine; alternate modification. N6-lactoyllysine; alternate occurs at positions 117 and 121. Lys-117 and Lys-121 each carry N6-glutaryllysine; alternate. N6-succinyllysine; alternate occurs at positions 117 and 121. The residue at position 117 (Lys-117) is an N6-malonyllysine; alternate. The residue at position 117 (Lys-117) is an N6-methylated lysine; alternate. Residue Lys-121 forms a Glycyl lysine isopeptide (Lys-Gly) (interchain with G-Cter in ubiquitin); alternate linkage.

The protein belongs to the histone H2B family. In terms of assembly, the nucleosome is a histone octamer containing two molecules each of H2A, H2B, H3 and H4 assembled in one H3-H4 heterotetramer and two H2A-H2B heterodimers. The octamer wraps approximately 147 bp of DNA. Post-translationally, monoubiquitination at Lys-35 (H2BK34Ub) by the MSL1/MSL2 dimer is required for histone H3 'Lys-4' (H3K4me) and 'Lys-79' (H3K79me) methylation and transcription activation at specific gene loci, such as HOXA9 and MEIS1 loci. Similarly, monoubiquitination at Lys-121 (H2BK120Ub) by the RNF20/40 complex gives a specific tag for epigenetic transcriptional activation and is also prerequisite for histone H3 'Lys-4' and 'Lys-79' methylation. It also functions cooperatively with the FACT dimer to stimulate elongation by RNA polymerase II. H2BK120Ub also acts as a regulator of mRNA splicing: deubiquitination by USP49 is required for efficient cotranscriptional splicing of a large set of exons. In terms of processing, phosphorylation at Ser-37 (H2BS36ph) by AMPK in response to stress promotes transcription. Phosphorylated on Ser-15 (H2BS14ph) by STK4/MST1 during apoptosis; which facilitates apoptotic chromatin condensation. Also phosphorylated on Ser-15 in response to DNA double strand breaks (DSBs), and in correlation with somatic hypermutation and immunoglobulin class-switch recombination. GlcNAcylation at Ser-113 promotes monoubiquitination of Lys-121. It fluctuates in response to extracellular glucose, and associates with transcribed genes. Post-translationally, ADP-ribosylated by PARP1 or PARP2 on Ser-7 (H2BS6ADPr) in response to DNA damage. H2BS6ADPr promotes recruitment of CHD1L. Mono-ADP-ribosylated on Glu-3 (H2BE2ADPr) by PARP3 in response to single-strand breaks. Poly ADP-ribosylation on Glu-36 (H2BE35ADPr) by PARP1 regulates adipogenesis: it inhibits phosphorylation at Ser-37 (H2BS36ph), thereby blocking expression of pro-adipogenetic genes. In terms of processing, crotonylation (Kcr) is specifically present in male germ cells and marks testis-specific genes in post-meiotic cells, including X-linked genes that escape sex chromosome inactivation in haploid cells. Crotonylation marks active promoters and enhancers and confers resistance to transcriptional repressors. It is also associated with post-meiotically activated genes on autosomes. Lactylated in macrophages by EP300/P300 by using lactoyl-CoA directly derived from endogenous or exogenous lactate, leading to stimulates gene transcription.

The protein resides in the nucleus. Its subcellular location is the chromosome. Core component of nucleosome. Nucleosomes wrap and compact DNA into chromatin, limiting DNA accessibility to the cellular machineries which require DNA as a template. Histones thereby play a central role in transcription regulation, DNA repair, DNA replication and chromosomal stability. DNA accessibility is regulated via a complex set of post-translational modifications of histones, also called histone code, and nucleosome remodeling. Its function is as follows. Has broad antibacterial activity. May contribute to the formation of the functional antimicrobial barrier of the colonic epithelium, and to the bactericidal activity of amniotic fluid. The polypeptide is Histone H2B type F-S (Homo sapiens (Human)).